The following is a 556-amino-acid chain: Urocanate hydratase (556 aa).

Residues 52–53 (GG), glutamine 130, 176–178 (GMG), glutamate 196, arginine 201, 242–243 (NA), 263–267 (QTSAH), 273–274 (YL), and tyrosine 322 each bind NAD(+). Cysteine 410 is an active-site residue. Glycine 492 serves as a coordination point for NAD(+).

Belongs to the urocanase family. NAD(+) is required as a cofactor.

Its subcellular location is the cytoplasm. It carries out the reaction 4-imidazolone-5-propanoate = trans-urocanate + H2O. Its pathway is amino-acid degradation; L-histidine degradation into L-glutamate; N-formimidoyl-L-glutamate from L-histidine: step 2/3. Its function is as follows. Catalyzes the conversion of urocanate to 4-imidazolone-5-propionate. This chain is Urocanate hydratase, found in Shewanella sediminis (strain HAW-EB3).